Reading from the N-terminus, the 426-residue chain is 3-phosphoshikimate 1-carboxyvinyltransferase (426 aa).

Lysine 20, serine 21, and arginine 25 together coordinate 3-phosphoshikimate. Lysine 20 is a phosphoenolpyruvate binding site. Phosphoenolpyruvate is bound by residues glycine 92 and arginine 120. Residues serine 165, glutamine 167, aspartate 313, and lysine 340 each contribute to the 3-phosphoshikimate site. Glutamine 167 contributes to the phosphoenolpyruvate binding site. Aspartate 313 functions as the Proton acceptor in the catalytic mechanism. 2 residues coordinate phosphoenolpyruvate: arginine 344 and arginine 386.

It belongs to the EPSP synthase family. In terms of assembly, monomer.

Its subcellular location is the cytoplasm. It carries out the reaction 3-phosphoshikimate + phosphoenolpyruvate = 5-O-(1-carboxyvinyl)-3-phosphoshikimate + phosphate. It functions in the pathway metabolic intermediate biosynthesis; chorismate biosynthesis; chorismate from D-erythrose 4-phosphate and phosphoenolpyruvate: step 6/7. Functionally, catalyzes the transfer of the enolpyruvyl moiety of phosphoenolpyruvate (PEP) to the 5-hydroxyl of shikimate-3-phosphate (S3P) to produce enolpyruvyl shikimate-3-phosphate and inorganic phosphate. The sequence is that of 3-phosphoshikimate 1-carboxyvinyltransferase from Brevibacillus brevis (strain 47 / JCM 6285 / NBRC 100599).